The chain runs to 386 residues: Demethylsterigmatocystin 6-O-methyltransferase (386 aa).

137–150 is a substrate binding site; the sequence is FDISGPCTQILPDF. The segment at 177–197 is substrate binding; it reads MFEWMPQHPKHMESLGHLMAL. Residues 228 to 229, D253, 273 to 274, and R289 contribute to the S-adenosyl-L-methionine site; these read GG and NF. The active-site Proton acceptor is the H293.

Belongs to the class I-like SAM-binding methyltransferase superfamily. Cation-independent O-methyltransferase family. COMT subfamily.

It carries out the reaction 6-demethylsterigmatocystin + S-adenosyl-L-methionine = sterigmatocystin + S-adenosyl-L-homocysteine + H(+). Its pathway is mycotoxin biosynthesis; aflatoxin biosynthesis. Functionally, catalyzes both the conversion of demethylsterigmatocystin (DMST) to sterigmatocystin and the conversion of dihydrodemethylsterigmatocystin to dihydrosterigmatocystin (DHDMST) during aflatoxin biosynthesis. This chain is Demethylsterigmatocystin 6-O-methyltransferase (omtB), found in Aspergillus flavus (strain ATCC 200026 / FGSC A1120 / IAM 13836 / NRRL 3357 / JCM 12722 / SRRC 167).